The following is a 253-amino-acid chain: Ubiquinone/menaquinone biosynthesis C-methyltransferase UbiE (253 aa).

S-adenosyl-L-methionine-binding positions include Thr76, Asp97, 125-126 (NA), and Ser142.

This sequence belongs to the class I-like SAM-binding methyltransferase superfamily. MenG/UbiE family.

It catalyses the reaction a 2-demethylmenaquinol + S-adenosyl-L-methionine = a menaquinol + S-adenosyl-L-homocysteine + H(+). The catalysed reaction is a 2-methoxy-6-(all-trans-polyprenyl)benzene-1,4-diol + S-adenosyl-L-methionine = a 5-methoxy-2-methyl-3-(all-trans-polyprenyl)benzene-1,4-diol + S-adenosyl-L-homocysteine + H(+). Its pathway is quinol/quinone metabolism; menaquinone biosynthesis; menaquinol from 1,4-dihydroxy-2-naphthoate: step 2/2. It functions in the pathway cofactor biosynthesis; ubiquinone biosynthesis. In terms of biological role, methyltransferase required for the conversion of demethylmenaquinol (DMKH2) to menaquinol (MKH2) and the conversion of 2-polyprenyl-6-methoxy-1,4-benzoquinol (DDMQH2) to 2-polyprenyl-3-methyl-6-methoxy-1,4-benzoquinol (DMQH2). In Xanthomonas axonopodis pv. citri (strain 306), this protein is Ubiquinone/menaquinone biosynthesis C-methyltransferase UbiE.